The primary structure comprises 306 residues: Elongation factor Ts (306 aa).

The segment at 80–83 (TDFV) is involved in Mg(2+) ion dislocation from EF-Tu.

This sequence belongs to the EF-Ts family.

The protein resides in the cytoplasm. Functionally, associates with the EF-Tu.GDP complex and induces the exchange of GDP to GTP. It remains bound to the aminoacyl-tRNA.EF-Tu.GTP complex up to the GTP hydrolysis stage on the ribosome. The polypeptide is Elongation factor Ts (Clostridium novyi (strain NT)).